Consider the following 343-residue polypeptide: Probable xyloglucan endotransglucosylase/hydrolase protein 30 (343 aa).

Positions 1-23 are cleaved as a signal peptide; sequence MSKSSYNHIFILILCLCLRSSSA. A GH16 domain is found at 24-224; the sequence is FTNLNTLSFE…YKFAPFVAEF (201 aa). Glutamate 109 serves as the catalytic Nucleophile. Catalysis depends on glutamate 113, which acts as the Proton donor. Xyloglucan is bound by residues glutamate 113 and 126 to 128; that span reads QTN. N-linked (GlcNAc...) asparagine glycosylation is present at asparagine 132. Residues 136–140, 203–204, glycine 208, and arginine 285 contribute to the xyloglucan site; these read HRGRE and DW. A disulfide bridge connects residues cysteine 280 and cysteine 293. Residues 306–343 form a disordered region; the sequence is TGRLKFGGTEARERRRNRRQQRRPEIEIESDPDDRKLL.

Belongs to the glycosyl hydrolase 16 family. XTH group 3 subfamily. In terms of processing, contains at least one intrachain disulfide bond essential for its enzymatic activity. Predominantly expressed in green siliques.

It localises to the secreted. It is found in the cell wall. The protein resides in the extracellular space. The protein localises to the apoplast. The enzyme catalyses breaks a beta-(1-&gt;4) bond in the backbone of a xyloglucan and transfers the xyloglucanyl segment on to O-4 of the non-reducing terminal glucose residue of an acceptor, which can be a xyloglucan or an oligosaccharide of xyloglucan.. In terms of biological role, catalyzes xyloglucan endohydrolysis (XEH) and/or endotransglycosylation (XET). Cleaves and religates xyloglucan polymers, an essential constituent of the primary cell wall, and thereby participates in cell wall construction of growing tissues. This Arabidopsis thaliana (Mouse-ear cress) protein is Probable xyloglucan endotransglucosylase/hydrolase protein 30 (XTH30).